A 174-amino-acid chain; its full sequence is Large ribosomal subunit protein uL18 (174 aa).

It belongs to the universal ribosomal protein uL18 family. As to quaternary structure, part of the 50S ribosomal subunit. Contacts the 5S and 23S rRNAs.

In terms of biological role, this is one of the proteins that bind and probably mediate the attachment of the 5S RNA into the large ribosomal subunit, where it forms part of the central protuberance. The polypeptide is Large ribosomal subunit protein uL18 (Methanocorpusculum labreanum (strain ATCC 43576 / DSM 4855 / Z)).